A 738-amino-acid polypeptide reads, in one-letter code: Polyphosphate kinase (738 aa).

Positions 1–48 (MIGNDRWVTEIETGPVTEARPDTNAREPGDRTPAAPPAATPAATTDQL) are disordered. Over residues 19–30 (ARPDTNAREPGD) the composition is skewed to basic and acidic residues. N91 is an ATP binding site. Mg(2+) contacts are provided by R427 and R457. Catalysis depends on H487, which acts as the Phosphohistidine intermediate. ATP contacts are provided by Y520, R620, and H648.

The protein belongs to the polyphosphate kinase 1 (PPK1) family. Mg(2+) is required as a cofactor. Post-translationally, an intermediate of this reaction is the autophosphorylated ppk in which a phosphate is covalently linked to a histidine residue through a N-P bond.

The enzyme catalyses [phosphate](n) + ATP = [phosphate](n+1) + ADP. In terms of biological role, catalyzes the reversible transfer of the terminal phosphate of ATP to form a long-chain polyphosphate (polyP). In Mycobacterium marinum (strain ATCC BAA-535 / M), this protein is Polyphosphate kinase.